The chain runs to 297 residues: Tyrosine recombinase XerD (297 aa).

The region spanning 1-87 (MLEYAIEDFF…SIRSFHQFLI (87 aa)) is the Core-binding (CB) domain. A Tyr recombinase domain is found at 108–291 (KLPDILSQDE…TKARLKDMYQ (184 aa)). Catalysis depends on residues arginine 147, lysine 171, histidine 243, arginine 246, and histidine 269. Tyrosine 278 serves as the catalytic O-(3'-phospho-DNA)-tyrosine intermediate.

The protein belongs to the 'phage' integrase family. XerD subfamily. Forms a cyclic heterotetrameric complex composed of two molecules of XerC and two molecules of XerD.

It is found in the cytoplasm. In terms of biological role, site-specific tyrosine recombinase, which acts by catalyzing the cutting and rejoining of the recombining DNA molecules. The XerC-XerD complex is essential to convert dimers of the bacterial chromosome into monomers to permit their segregation at cell division. It also contributes to the segregational stability of plasmids. In Oceanobacillus iheyensis (strain DSM 14371 / CIP 107618 / JCM 11309 / KCTC 3954 / HTE831), this protein is Tyrosine recombinase XerD.